A 37-amino-acid polypeptide reads, in one-letter code: Esculentin-2B (37 aa).

Cys-31 and Cys-37 are disulfide-bonded.

In terms of tissue distribution, expressed by the skin glands.

Its subcellular location is the secreted. Functionally, antibacterial activity against Gram-positive bacterium S.aureus and Gram-negative bacterium E.coli. Has activity against C.albicans. In Lithobates berlandieri (Rio Grande leopard frog), this protein is Esculentin-2B.